The sequence spans 321 residues: 26S proteasome non-ATPase regulatory subunit 7 (321 aa).

The region spanning 9 to 144 (VVVHPLVLLS…TEAYISVEEV (136 aa)) is the MPN domain. Residue K180 forms a Glycyl lysine isopeptide (Lys-Gly) (interchain with G-Cter in ubiquitin) linkage. 4 positions are modified to N6-acetyllysine: K204, K214, K313, and K314. Residues 281-321 (ANRDAEKKEGQEKEESKKERKDDKEKEKSDAAKKEEKKEKK) are disordered.

Belongs to the peptidase M67A family. In terms of assembly, component of the 19S proteasome regulatory particle complex. The 26S proteasome consists of a 20S core particle (CP) and two 19S regulatory subunits (RP). The regulatory particle is made of a lid composed of 9 subunits including PSMD7, a base containing 6 ATPases and few additional components. Within the complex, PSMD7 interacts with subunit PSMD4 through their respective MPN domain. Interacts with TRIM5.

Its function is as follows. Component of the 26S proteasome, a multiprotein complex involved in the ATP-dependent degradation of ubiquitinated proteins. This complex plays a key role in the maintenance of protein homeostasis by removing misfolded or damaged proteins, which could impair cellular functions, and by removing proteins whose functions are no longer required. Therefore, the proteasome participates in numerous cellular processes, including cell cycle progression, apoptosis, or DNA damage repair. The chain is 26S proteasome non-ATPase regulatory subunit 7 (Psmd7) from Mus musculus (Mouse).